We begin with the raw amino-acid sequence, 1677 residues long: Zinc finger protein 831 (1677 aa).

Pro residues predominate over residues 1–26 (MEVPEPTCPAPPARDQPAPTPGPPGA). The tract at residues 1–43 (MEVPEPTCPAPPARDQPAPTPGPPGAPGGQASPHLTLGPVLLP) is disordered. 2 C2H2-type zinc fingers span residues 144–166 (YLCPHCGRDCLKPSVLEKHIRSH) and 172–196 (FPCATCGIAFKTQSNLYKHRRTQTH). Disordered stretches follow at residues 193 to 250 (TQTH…SPGA), 270 to 398 (GSAF…AGLE), 516 to 557 (WLEP…PSGH), 663 to 931 (EAAG…VLSA), 950 to 1062 (TPLP…TCEA), 1100 to 1119 (NWELGEPPGNAPEDPSSGPL), 1137 to 1176 (LTRPQGVPPGWPELALSSHSGTSRSHSTRSPHSTQNPFPS), 1216 to 1243 (LRDEGPNGPPGSNGGWTWTSPGEGGPAQ), 1510 to 1597 (SAES…GQYG), and 1620 to 1677 (LITR…VIEI). Basic and acidic residues-rich tracts occupy residues 216–232 (EGDKAGEPPRPEGRGES) and 325–341 (KPWDAKAPEGRLRKCES). Residues 376–385 (EGGPGPGPGV) show a composition bias toward gly residues. Positions 391-423 (GAREAGLELEKKRLEERIAQLISHNQAVVDDAQ) form a coiled coil. 4 stretches are compositionally biased toward basic and acidic residues: residues 517–526 (LEPREPRDPW), 674–684 (QDRRTPVHEDI), 707–727 (PTKHGETVARRGDSDRPRVEE), and 813–834 (SGEDKLPSERKKLKVEDLHSWK). 2 stretches are compositionally biased toward low complexity: residues 880–894 (LESSGASLAAASVAL) and 905–919 (PLHPAAPAPAEHPSL). Residues 1153–1170 (SSHSGTSRSHSTRSPHST) show a composition bias toward low complexity. Over residues 1518–1531 (QTAGRTLTSSSPDS) the composition is skewed to polar residues. Residues 1649–1662 (RSLEGMRKQTRVEF) show a composition bias toward basic and acidic residues.

This chain is Zinc finger protein 831 (ZNF831), found in Homo sapiens (Human).